Here is a 463-residue protein sequence, read N- to C-terminus: Chaperone SurA (463 aa).

The first 25 residues, 1–25 (MTKPFSVVLASLLAITSTVSPLASA), serve as a signal peptide directing secretion. 2 consecutive PpiC domains span residues 174 to 276 (GSQY…KLVE) and 289 to 388 (VTEY…QRVG). Disordered regions lie at residues 329–348 (ATAKESSEDTNSRGQGGDLG) and 431–463 (YRTGDRADDNATAAPAKSPDPAAPSPPPAKPTR). The span at 441–450 (ATAAPAKSPD) shows a compositional bias: low complexity. Over residues 451-463 (PAAPSPPPAKPTR) the composition is skewed to pro residues.

Its subcellular location is the periplasm. It catalyses the reaction [protein]-peptidylproline (omega=180) = [protein]-peptidylproline (omega=0). Chaperone involved in the correct folding and assembly of outer membrane proteins. Recognizes specific patterns of aromatic residues and the orientation of their side chains, which are found more frequently in integral outer membrane proteins. May act in both early periplasmic and late outer membrane-associated steps of protein maturation. In Xanthomonas axonopodis pv. citri (strain 306), this protein is Chaperone SurA.